The following is a 140-amino-acid chain: Large ribosomal subunit protein uL15 (140 aa).

The tract at residues 1 to 32 (MDTKKFRGSRTCGGGTHKNRRGAGNRGGRGKA) is disordered.

This sequence belongs to the universal ribosomal protein uL15 family. In terms of assembly, part of the 50S ribosomal subunit.

Binds to the 23S rRNA. The chain is Large ribosomal subunit protein uL15 from Methanosarcina acetivorans (strain ATCC 35395 / DSM 2834 / JCM 12185 / C2A).